A 131-amino-acid polypeptide reads, in one-letter code: NADPH-dependent 7-cyano-7-deazaguanine reductase (131 aa).

Cys41 (thioimide intermediate) is an active-site residue. Asp48 serves as the catalytic Proton donor. Residues 63 to 65 and 82 to 83 each bind substrate; these read VEL and HE.

This sequence belongs to the GTP cyclohydrolase I family. QueF type 1 subfamily.

The protein localises to the cytoplasm. It catalyses the reaction 7-aminomethyl-7-carbaguanine + 2 NADP(+) = 7-cyano-7-deazaguanine + 2 NADPH + 3 H(+). It participates in tRNA modification; tRNA-queuosine biosynthesis. Functionally, catalyzes the NADPH-dependent reduction of 7-cyano-7-deazaguanine (preQ0) to 7-aminomethyl-7-deazaguanine (preQ1). The polypeptide is NADPH-dependent 7-cyano-7-deazaguanine reductase (Nitratiruptor sp. (strain SB155-2)).